Consider the following 122-residue polypeptide: Small ribosomal subunit protein uS13 (122 aa).

The interval 94 to 122 (KGLPVRGQRTHTNARTRKGPRRAIAGKKK) is disordered.

It belongs to the universal ribosomal protein uS13 family. In terms of assembly, part of the 30S ribosomal subunit. Forms a loose heterodimer with protein S19. Forms two bridges to the 50S subunit in the 70S ribosome.

Located at the top of the head of the 30S subunit, it contacts several helices of the 16S rRNA. In the 70S ribosome it contacts the 23S rRNA (bridge B1a) and protein L5 of the 50S subunit (bridge B1b), connecting the 2 subunits; these bridges are implicated in subunit movement. Contacts the tRNAs in the A and P-sites. This chain is Small ribosomal subunit protein uS13, found in Syntrophus aciditrophicus (strain SB).